The following is a 279-amino-acid chain: Movement protein (279 aa).

Belongs to the cucumovirus movement protein family.

It is found in the host cell junction. The protein resides in the host plasmodesma. In terms of biological role, transports viral genome to neighboring plant cells directly through plasmosdesmata, without any budding. The movement protein allows efficient cell to cell propagation, by bypassing the host cell wall barrier. Acts by forming a tubular structure at the host plasmodesmata, enlarging it enough to allow free passage of virion capsids. This Cucumber mosaic virus (strain Ixora) (CMV) protein is Movement protein.